A 366-amino-acid polypeptide reads, in one-letter code: uncharacterized protein (366 aa).

The OBG-type G domain occupies 63 to 288 (ARVAMVGFPS…LLEKMWEYLA (226 aa)). GTP is bound by residues 69–76 (GFPSVGKS), 115–119 (DLPGI), and 246–249 (NKVD). A TGS domain is found at 288–365 (ALVRVYTKKP…DHEDVIQIVK (78 aa)).

The protein belongs to the TRAFAC class OBG-HflX-like GTPase superfamily. OBG GTPase family.

This is an uncharacterized protein from Caenorhabditis elegans.